A 396-amino-acid chain; its full sequence is Enoyl-[acyl-carrier-protein] reductase [NADH] (396 aa).

NAD(+) is bound by residues 47–52 (GASTGF), 73–74 (FE), 110–111 (DA), and 138–139 (LA). Tyr-224 contacts substrate. Tyr-234 serves as the catalytic Proton donor. NAD(+) is bound by residues Lys-243 and 272–274 (LVT).

It belongs to the TER reductase family. As to quaternary structure, monomer.

It catalyses the reaction a 2,3-saturated acyl-[ACP] + NAD(+) = a (2E)-enoyl-[ACP] + NADH + H(+). It participates in lipid metabolism; fatty acid biosynthesis. Its function is as follows. Involved in the final reduction of the elongation cycle of fatty acid synthesis (FAS II). Catalyzes the reduction of a carbon-carbon double bond in an enoyl moiety that is covalently linked to an acyl carrier protein (ACP). The polypeptide is Enoyl-[acyl-carrier-protein] reductase [NADH] (Flavobacterium psychrophilum (strain ATCC 49511 / DSM 21280 / CIP 103535 / JIP02/86)).